The following is a 372-amino-acid chain: Probable L-tyrosine/L-aspartate decarboxylase (372 aa).

N6-(pyridoxal phosphate)lysine is present on lysine 215.

Belongs to the group II decarboxylase family. MfnA subfamily. Pyridoxal 5'-phosphate serves as cofactor.

The enzyme catalyses L-tyrosine + H(+) = tyramine + CO2. The catalysed reaction is L-aspartate + H(+) = beta-alanine + CO2. It participates in cofactor biosynthesis; methanofuran biosynthesis. Its pathway is cofactor biosynthesis; coenzyme A biosynthesis. Catalyzes the decarboxylation of L-tyrosine to produce tyramine for methanofuran biosynthesis. Can also catalyze the decarboxylation of L-aspartate to produce beta-alanine for coenzyme A (CoA) biosynthesis. This Methanopyrus kandleri (strain AV19 / DSM 6324 / JCM 9639 / NBRC 100938) protein is Probable L-tyrosine/L-aspartate decarboxylase.